Reading from the N-terminus, the 338-residue chain is POU domain, class 4, transcription factor 3 (338 aa).

The POU-IV box motif lies at 56 to 65; it reads RAEALAAVDI. A POU-specific domain is found at 179 to 256; sequence DVESDPRELE…VLQAWLEEAE (78 aa). A DNA-binding region (homeobox) is located at residues 274–333; it reads RKRKRTSIAAPEKRSLEAYFAIQPRPSSEKIAAIAEKLDLKKNVVRVWFCNQRQKQKRMK.

It belongs to the POU transcription factor family. Class-4 subfamily. Interacts with ISL1. As to expression, brain. Seems to be specific to the retina.

The protein resides in the nucleus. It is found in the cytoplasm. Its function is as follows. Acts as a transcriptional activator. Acts by binding to sequences related to the consensus octamer motif 5'-ATGCAAAT-3' in the regulatory regions of its target genes. Involved in the auditory system development, required for terminal differentiation of hair cells in the inner ear. This chain is POU domain, class 4, transcription factor 3 (POU4F3), found in Homo sapiens (Human).